The sequence spans 427 residues: mRNA cap guanine-N(7) methyltransferase (427 aa).

A disordered region spans residues 1–79 (MSLNYEQNAA…EPETEAASGA (79 aa)). Residues Ser22, Ser24, Ser29, Ser46, and Ser48 each carry the phosphoserine modification. Basic and acidic residues predominate over residues 44–57 (HVSKSPREYYDEPG). The mRNA cap 0 methyltransferase domain maps to 103 to 411 (SKIFFMRNFN…LYLVCAFKKC (309 aa)). 112-113 (NN) is a binding site for mRNA. S-adenosyl-L-methionine contacts are provided by Lys116, Cys143, Asp165, Asp202, Gln225, and Tyr230.

Belongs to the class I-like SAM-binding methyltransferase superfamily. mRNA cap 0 methyltransferase family.

It is found in the nucleus. It catalyses the reaction a 5'-end (5'-triphosphoguanosine)-ribonucleoside in mRNA + S-adenosyl-L-methionine = a 5'-end (N(7)-methyl 5'-triphosphoguanosine)-ribonucleoside in mRNA + S-adenosyl-L-homocysteine. MRNA-capping methyltransferase that methylates the N7 position of the added guanosine to the 5'-cap structure of mRNAs. Binds RNA containing 5'-terminal GpppC. The sequence is that of mRNA cap guanine-N(7) methyltransferase from Drosophila melanogaster (Fruit fly).